A 424-amino-acid polypeptide reads, in one-letter code: 5-methylthioadenosine/S-adenosylhomocysteine deaminase (424 aa).

Residues H60 and H62 each coordinate Zn(2+). 2 residues coordinate substrate: E89 and H181. Residue H208 coordinates Zn(2+). 2 residues coordinate substrate: E211 and D296. Zn(2+) is bound at residue D296.

This sequence belongs to the metallo-dependent hydrolases superfamily. MTA/SAH deaminase family. Zn(2+) is required as a cofactor.

The enzyme catalyses S-adenosyl-L-homocysteine + H2O + H(+) = S-inosyl-L-homocysteine + NH4(+). It catalyses the reaction S-methyl-5'-thioadenosine + H2O + H(+) = S-methyl-5'-thioinosine + NH4(+). Functionally, catalyzes the deamination of 5-methylthioadenosine and S-adenosyl-L-homocysteine into 5-methylthioinosine and S-inosyl-L-homocysteine, respectively. Is also able to deaminate adenosine. The chain is 5-methylthioadenosine/S-adenosylhomocysteine deaminase from Thermococcus sibiricus (strain DSM 12597 / MM 739).